Reading from the N-terminus, the 161-residue chain is Phosphopantetheine adenylyltransferase (161 aa).

Position 9 (Ser-9) interacts with substrate. Residues 9 to 10 and His-17 each bind ATP; that span reads SF. 3 residues coordinate substrate: Lys-41, Leu-73, and Lys-87. ATP is bound by residues 88-90, Glu-98, and 122-128; these read GLR and FSFLSSS.

The protein belongs to the bacterial CoaD family. In terms of assembly, homohexamer. Mg(2+) serves as cofactor.

The protein resides in the cytoplasm. The enzyme catalyses (R)-4'-phosphopantetheine + ATP + H(+) = 3'-dephospho-CoA + diphosphate. Its pathway is cofactor biosynthesis; coenzyme A biosynthesis; CoA from (R)-pantothenate: step 4/5. Reversibly transfers an adenylyl group from ATP to 4'-phosphopantetheine, yielding dephospho-CoA (dPCoA) and pyrophosphate. This is Phosphopantetheine adenylyltransferase from Nocardia farcinica (strain IFM 10152).